Consider the following 74-residue polypeptide: Psi-conotoxin PrIIIE (74 aa).

Residues 1 to 19 (MSKLGVLLTICLLLFPITA) form the signal peptide. The propeptide occupies 20-50 (LPVDGDQPADRPVERMQDNISSEQHPFFEKR). 3 disulfides stabilise this stretch: C54–C66, C55–C71, and C61–C72. C72 bears the Cysteine amide mark.

The protein belongs to the conotoxin M superfamily. Expressed by the venom duct.

Its subcellular location is the secreted. Its function is as follows. Psi-conotoxins act on postsynaptic membranes, and act as non-competitive antagonist of nicotinic acetylcholine receptors (nAChR). Reversibly inhibits both adult- and fetal-types nAChR. The inhibition potency against the adult- (alpha-1/beta-1/epsilon/delta) is higher than against the fetal-type (alpha-1/beta-1/gamma/delta). Induces flaccid paralysis in goldfish, but does not induce any remarkable behavior in mice and does not block action potential in directly stimulated frog muscle preparations. The sequence is that of Psi-conotoxin PrIIIE from Conus parius (Cone snail).